We begin with the raw amino-acid sequence, 604 residues long: ATP-dependent RNA helicase DBP1 (604 aa).

The tract at residues 1-79 (MSDGSGRYVP…RASGSGGFGG (79 aa)) is disordered. The span at 32 to 45 (SRYSGNGFFSSPNR) shows a compositional bias: polar residues. Residues 138-166 (TEFKSPPLDELLLENVELANFSKPTPVQK) carry the Q motif motif. The region spanning 169–358 (IPIVTKNRDL…RDFLKDYIFL (190 aa)) is the Helicase ATP-binding domain. 182–189 (AQTGSGKT) contributes to the ATP binding site. A DEAD box motif is present at residues 302-305 (DEAD). Positions 386–529 (LLDILINEID…EVPQFLVNMV (144 aa)) constitute a Helicase C-terminal domain. A disordered region spans residues 535 to 591 (FGRGGRNSRTGSNRGRGSNTRDYRHSNKDDWGSLGSSRRGFRSNDNRGFGNNWGSSS). The span at 541 to 552 (NSRTGSNRGRGS) shows a compositional bias: low complexity. The segment covering 553–565 (NTRDYRHSNKDDW) has biased composition (basic and acidic residues).

Belongs to the DEAD box helicase family. DDX3/DED1 subfamily.

Its subcellular location is the cytoplasm. The enzyme catalyses ATP + H2O = ADP + phosphate + H(+). Its function is as follows. ATP-binding RNA helicase involved in translation initiation. Remodels RNA in response to ADP and ATP concentrations by facilitating disruption, but also formation of RNA duplexes. Redundant to DED1, may be required in conditions in which DED1 expression is decreased. The polypeptide is ATP-dependent RNA helicase DBP1 (DBP1) (Candida glabrata (strain ATCC 2001 / BCRC 20586 / JCM 3761 / NBRC 0622 / NRRL Y-65 / CBS 138) (Yeast)).